The primary structure comprises 184 residues: ATP-dependent protease subunit HslV (184 aa).

Thr12 is an active-site residue. Residues Ala167, Cys170, and Thr173 each contribute to the Na(+) site.

Belongs to the peptidase T1B family. HslV subfamily. In terms of assembly, a double ring-shaped homohexamer of HslV is capped on each side by a ring-shaped HslU homohexamer. The assembly of the HslU/HslV complex is dependent on binding of ATP.

Its subcellular location is the cytoplasm. It catalyses the reaction ATP-dependent cleavage of peptide bonds with broad specificity.. With respect to regulation, allosterically activated by HslU binding. Functionally, protease subunit of a proteasome-like degradation complex believed to be a general protein degrading machinery. The sequence is that of ATP-dependent protease subunit HslV from Wolbachia pipientis subsp. Culex pipiens (strain wPip).